Here is a 501-residue protein sequence, read N- to C-terminus: L-arabinose isomerase (501 aa).

Positions 306, 333, 350, and 449 each coordinate Mn(2+).

The protein belongs to the arabinose isomerase family. Mn(2+) is required as a cofactor.

The catalysed reaction is beta-L-arabinopyranose = L-ribulose. The protein operates within carbohydrate degradation; L-arabinose degradation via L-ribulose; D-xylulose 5-phosphate from L-arabinose (bacterial route): step 1/3. Functionally, catalyzes the conversion of L-arabinose to L-ribulose. This chain is L-arabinose isomerase, found in Mycolicibacterium smegmatis (strain ATCC 700084 / mc(2)155) (Mycobacterium smegmatis).